The primary structure comprises 329 residues: Tryptophan--tRNA ligase (329 aa).

Residues 9–11 and 17–18 contribute to the ATP site; these read QPS and GN. A 'HIGH' region motif is present at residues 10–18; that stretch reads PSGIPTIGN. Position 133 (Asp-133) interacts with L-tryptophan. Residues 145 to 147, Val-184, and 193 to 197 each bind ATP; these read GDD and KMSKS. The 'KMSKS' region signature appears at 193-197; the sequence is KMSKS.

This sequence belongs to the class-I aminoacyl-tRNA synthetase family. As to quaternary structure, homodimer.

Its subcellular location is the cytoplasm. It carries out the reaction tRNA(Trp) + L-tryptophan + ATP = L-tryptophyl-tRNA(Trp) + AMP + diphosphate + H(+). Its function is as follows. Catalyzes the attachment of tryptophan to tRNA(Trp). This Staphylococcus aureus (strain MRSA252) protein is Tryptophan--tRNA ligase.